The chain runs to 457 residues: Argininosuccinate lyase (457 aa).

Belongs to the lyase 1 family. Argininosuccinate lyase subfamily.

The protein localises to the cytoplasm. It carries out the reaction 2-(N(omega)-L-arginino)succinate = fumarate + L-arginine. The protein operates within amino-acid biosynthesis; L-arginine biosynthesis; L-arginine from L-ornithine and carbamoyl phosphate: step 3/3. This is Argininosuccinate lyase from Bacillus pumilus (strain SAFR-032).